A 484-amino-acid chain; its full sequence is TPR repeat-containing protein YvcD (484 aa).

TPR repeat units lie at residues 21 to 54, 55 to 88, and 187 to 220; these read GQYF…EPED, SEML…LEAE, and WSAY…NEGN.

This Bacillus subtilis (strain 168) protein is TPR repeat-containing protein YvcD (yvcD).